We begin with the raw amino-acid sequence, 254 residues long: Type II methyl-directed restriction enzyme DpnI (254 aa).

It belongs to the DpnI type II restriction endonuclease family.

It carries out the reaction Endonucleolytic cleavage of DNA to give specific double-stranded fragments with terminal 5'-phosphates.. In terms of biological role, an M and P subtype restriction enzyme that recognizes the double-stranded, methylated sequence 5'-G(Me)ATC-3' and cleaves after A-2. This Streptococcus pneumoniae serotype 4 (strain ATCC BAA-334 / TIGR4) protein is Type II methyl-directed restriction enzyme DpnI.